The chain runs to 609 residues: Protein alan shepard (609 aa).

Residues 1 to 12 are compositionally biased toward pro residues; it reads MHPRYSPAPPPL. The segment at 1-96 is disordered; the sequence is MHPRYSPAPP…ASVAAAPPTP (96 aa). Tyr-5 is modified (phosphotyrosine). Residues 13–35 are compositionally biased toward low complexity; the sequence is HQQQQQQPPQQQQQQMGGPHQQQ. A compositionally biased stretch (gly residues) spans 37–50; the sequence is GGVGPGTGHGGVGA. Composition is skewed to low complexity over residues 51–68 and 83–92; these read AVGA…NSQQ and SSSAASVAAA. Tyr-152 and Tyr-168 each carry phosphotyrosine. The disordered stretch occupies residues 190–252; that stretch reads PATTTYGQRV…AQNQNQQGGE (63 aa). Residues 204 to 252 are compositionally biased toward low complexity; sequence SPSNTNSSSSSNTGSQSGTLSTSLSNTTNTNTTMGPNGTAQNQNQQGGE. RRM domains lie at 257 to 330 and 336 to 415; these read TNLY…MAKQ and TNLY…FADG. The disordered stretch occupies residues 583-609; that stretch reads MTDSEQASTAASPDEAYTQYPHQAAPK.

Has a role in the perception of gravity. This chain is Protein alan shepard, found in Drosophila grimshawi (Hawaiian fruit fly).